We begin with the raw amino-acid sequence, 438 residues long: Tol-Pal system protein TolB (438 aa).

An N-terminal signal peptide occupies residues 1-36; that stretch reads MTPAFRRADLTGFLRTYGAALILLLAAMLAWQPAQA.

It belongs to the TolB family. The Tol-Pal system is composed of five core proteins: the inner membrane proteins TolA, TolQ and TolR, the periplasmic protein TolB and the outer membrane protein Pal. They form a network linking the inner and outer membranes and the peptidoglycan layer.

It is found in the periplasm. Its function is as follows. Part of the Tol-Pal system, which plays a role in outer membrane invagination during cell division and is important for maintaining outer membrane integrity. This chain is Tol-Pal system protein TolB, found in Bordetella pertussis (strain Tohama I / ATCC BAA-589 / NCTC 13251).